Reading from the N-terminus, the 156-residue chain is Transcription elongation factor GreA (156 aa).

Residues 46–67 are a coiled coil; the sequence is AEYHAAREKQSFIEGRIKELEA.

The protein belongs to the GreA/GreB family.

Functionally, necessary for efficient RNA polymerase transcription elongation past template-encoded arresting sites. The arresting sites in DNA have the property of trapping a certain fraction of elongating RNA polymerases that pass through, resulting in locked ternary complexes. Cleavage of the nascent transcript by cleavage factors such as GreA or GreB allows the resumption of elongation from the new 3'terminus. GreA releases sequences of 2 to 3 nucleotides. The polypeptide is Transcription elongation factor GreA (Cereibacter sphaeroides (strain ATCC 17029 / ATH 2.4.9) (Rhodobacter sphaeroides)).